A 75-amino-acid polypeptide reads, in one-letter code: Small ribosomal subunit protein bS18 (75 aa).

Belongs to the bacterial ribosomal protein bS18 family. Part of the 30S ribosomal subunit. Forms a tight heterodimer with protein bS6.

Functionally, binds as a heterodimer with protein bS6 to the central domain of the 16S rRNA, where it helps stabilize the platform of the 30S subunit. This chain is Small ribosomal subunit protein bS18, found in Klebsiella pneumoniae (strain 342).